The sequence spans 723 residues: ATP-dependent DNA helicase RRM3 (723 aa).

Disordered stretches follow at residues 1–31 and 61–101; these read MFRS…SGSH and DLES…DDDP. Ser-64 carries the phosphoserine modification. Residues 83 to 96 are compositionally biased toward low complexity; that stretch reads NNSSSLFSQSQGSF. 254 to 261 is an ATP binding site; that stretch reads GSAGTGKS. Residues 682-701 mediate DNA binding; that stretch reads QVYVALSRAVTMDTLQVLNF.

Belongs to the helicase family. As to quaternary structure, interacts with DEF1 and POL30.

The protein resides in the nucleus. It is found in the chromosome. It localises to the telomere. The enzyme catalyses Couples ATP hydrolysis with the unwinding of duplex DNA at the replication fork by translocating in the 5'-3' direction. This creates two antiparallel DNA single strands (ssDNA). The leading ssDNA polymer is the template for DNA polymerase III holoenzyme which synthesizes a continuous strand.. It catalyses the reaction ATP + H2O = ADP + phosphate + H(+). Its function is as follows. 5' to 3' DNA replicative helicase recruited to paused replisomes to promote fork progression throughout nonhistone protein-DNA complexes, naturally occurring impediments that are encountered in each S phase where replication forks pauses. Needed for normal fork progression through over 1000 discrete sites scattered throughout the genome, like rDNA, tRNA genes, centromeres, active replication origins, or transcriptional silencers. Required for timely replication of the telomere and subtelomeric DNA and for wild-type levels of telomeric silencing. Involved in regulation of Ty1 transposition and protects the genome from instability at nascent sites of retrotransposition. Involved in DNA repair during stalled replication fork, regulation of fragile sites expression and essential for genome stability. Also plays a role in mtDNA replication. Has G-quadruplex (G4) unwinding activity and can suppress G4-induced genome instability when PIF1 levels are low. The sequence is that of ATP-dependent DNA helicase RRM3 from Saccharomyces cerevisiae (strain ATCC 204508 / S288c) (Baker's yeast).